We begin with the raw amino-acid sequence, 428 residues long: MAKEKPHINIVFIGHVDHGKSTTIGRLLFDTANIPENIIKKFEEMGEKGKSFKFAWVMDRLKEERERGITIDVAHTKFETPHRYITIIDAPGHRDFVKNMITGASQADAAVLVVAVTDGVMPQTKEHAFLARTLGINNILVAVNKMDMVNYDEKKFKAVAEQVKKLLMMLGYKNFPIIPISAWEGDNVVKKSDKMPWYNGPTLIEALDQMPEPPKPTDKPLRIPIQDVYSIKGVGTVPVGRVETGVLRVGDVVIFEPASTIFHKPIQGEVKSIEMHHEPMQEALPGDNIGFNVRGVGKNDIKRGDVAGHTNNPPTVVRPKDTFKAQIIVLNHPTAITVGYTPVLHAHTLQVAVRFEQLLAKLDPRTGNIVEENPQFIKTGDSAIVVLRPTKPMVIEPVKEIPQMGRFAIRDMGQTVAAGMVISIQKAE.

Residues 5–215 (KPHINIVFIG…ALDQMPEPPK (211 aa)) form the tr-type G domain. Residues 14–21 (GHVDHGKS) are G1. Residue 14–21 (GHVDHGKS) coordinates GTP. Serine 21 contributes to the Mg(2+) binding site. Positions 68–72 (GITID) are G2. The tract at residues 89–92 (DAPG) is G3. GTP is bound by residues 89-93 (DAPGH) and 144-147 (NKMD). Positions 144 to 147 (NKMD) are G4. The segment at 181–183 (SAW) is G5.

It belongs to the TRAFAC class translation factor GTPase superfamily. Classic translation factor GTPase family. EF-Tu/EF-1A subfamily.

The protein localises to the cytoplasm. It catalyses the reaction GTP + H2O = GDP + phosphate + H(+). Functionally, GTP hydrolase that promotes the GTP-dependent binding of aminoacyl-tRNA to the A-site of ribosomes during protein biosynthesis. The sequence is that of Elongation factor 1-alpha from Thermococcus celer.